Reading from the N-terminus, the 419-residue chain is Protein FAM217A (419 aa).

Disordered stretches follow at residues 1 to 60 (MGRK…LENP), 96 to 119 (KGST…DLSE), 236 to 299 (SSSK…SRAL), and 317 to 382 (KNSK…RTKK). Residues 7 to 19 (ESCSSSLHVSSIS) show a composition bias toward low complexity. The segment covering 236–251 (SSSKAIATKAKAPKIP) has biased composition (low complexity). Polar residues-rich tracts occupy residues 252-261 (ETSTLQTSGV) and 271-281 (NSGSGKPEQNV). 2 stretches are compositionally biased toward low complexity: residues 282-296 (SKWS…KSNS) and 334-345 (PTTTTQATQPMA).

This sequence belongs to the FAM217 family.

The protein is Protein FAM217A (Fam217a) of Mus musculus (Mouse).